A 269-amino-acid chain; its full sequence is 4-hydroxy-tetrahydrodipicolinate reductase (269 aa).

NAD(+) contacts are provided by residues 8 to 13 and glutamate 34; that span reads GAAGRM. Arginine 35 contacts NADP(+). NAD(+)-binding positions include 98–100 and 122–125; these read GTT and APNY. Residue histidine 155 is the Proton donor/acceptor of the active site. Histidine 156 is a binding site for (S)-2,3,4,5-tetrahydrodipicolinate. Lysine 159 functions as the Proton donor in the catalytic mechanism. 165–166 is a (S)-2,3,4,5-tetrahydrodipicolinate binding site; the sequence is GT.

It belongs to the DapB family.

The protein resides in the cytoplasm. The catalysed reaction is (S)-2,3,4,5-tetrahydrodipicolinate + NAD(+) + H2O = (2S,4S)-4-hydroxy-2,3,4,5-tetrahydrodipicolinate + NADH + H(+). It carries out the reaction (S)-2,3,4,5-tetrahydrodipicolinate + NADP(+) + H2O = (2S,4S)-4-hydroxy-2,3,4,5-tetrahydrodipicolinate + NADPH + H(+). It participates in amino-acid biosynthesis; L-lysine biosynthesis via DAP pathway; (S)-tetrahydrodipicolinate from L-aspartate: step 4/4. Catalyzes the conversion of 4-hydroxy-tetrahydrodipicolinate (HTPA) to tetrahydrodipicolinate. This Vibrio parahaemolyticus serotype O3:K6 (strain RIMD 2210633) protein is 4-hydroxy-tetrahydrodipicolinate reductase.